The following is a 254-amino-acid chain: Low affinity immunoglobulin gamma Fc region receptor III-A (254 aa).

The first 20 residues, 1–20 (MWHLLPPSALLLLISSVTKA), serve as a signal peptide directing secretion. Residues 21–209 (ADPSKAVVLL…IAPLFPLWQQ (189 aa)) are Extracellular-facing. 2 consecutive Ig-like C2-type domains span residues 23–104 (PSKA…VQLQ) and 121–174 (KGES…YYCR). N-linked (GlcNAc...) asparagine glycans are attached at residues N42, N63, N166, and N181. 2 cysteine pairs are disulfide-bonded: C47–C90 and C129–C173. Residues 210-230 (IAFCLMMGLLFAVDTGLYFFV) form a helical membrane-spanning segment. The Cytoplasmic segment spans residues 231–254 (RRDLRRSMVHKEEYNFKWSQAQDK).

Forms a heterooligomeric complex with ITAM-containing signaling subunits FCER1G. Interacts (via transmembrane domain) with signaling subunits; this interaction is a prerequisite for receptor complex expression on the cell surface and intracellular signal transduction. Binds the Fc region of antigen-complexed IgG. N-glycosylated. Post-translationally, phosphorylated following receptor ligation.

The protein resides in the cell membrane. In terms of biological role, receptor for the invariable Fc fragment of immunoglobulin gamma (IgG). Binds with intermediate affinity to both IgG2a and IgG2b. Can bind to IgG2a and IgG2b monomers. Does not display binding to IgG1 or IgG3. Recognizes neutralizing virus-specific IgGs displayed on the cell surface of infected cells and triggers antibody-dependent cellular cytotoxicity (ADCC). Confers protection to lethal influenza virus infection. On splenic dendritic cells, uptakes antigen immune complexes and efficiently divert them into MHC class I and II antigen presentation pathways to provide for superior priming of CD4-positive and CD8-positive T cell immune responses. Mediates neutrophil activation by IgG complexes redundantly with FCGR2A. Plays a role in promoting bone resorption by enhancing osteoclast differentiation following binding to IgG2a. Also acts as a receptor for the Fc region of immunoglobulin epsilon (IgE). Binds with low affinity to both the a and b allotypes of IgE. Has also been shown to bind to IgE allotype a only but not to allotype b. Binds aggregated IgE but not the monomeric form and bound monomeric IgG is readily displaced by IgE complexes. Binding to IgE promotes macrophage-mediated phagocytosis, antigen presentation to T cells, production of pro-inflammatory cytokines and the late phase of cutaneous allergic reactions. Mediates enhanced ADCC in response to afucosylated IgGs. This chain is Low affinity immunoglobulin gamma Fc region receptor III-A, found in Cavia porcellus (Guinea pig).